A 111-amino-acid chain; its full sequence is uncharacterized protein (111 aa).

To A.fulgidus AF1864.

This is an uncharacterized protein from Aquifex aeolicus (strain VF5).